The chain runs to 142 residues: Transcription antitermination protein NusB (142 aa).

Belongs to the NusB family.

In terms of biological role, involved in transcription antitermination. Required for transcription of ribosomal RNA (rRNA) genes. Binds specifically to the boxA antiterminator sequence of the ribosomal RNA (rrn) operons. This Streptococcus mutans serotype c (strain ATCC 700610 / UA159) protein is Transcription antitermination protein NusB.